A 148-amino-acid chain; its full sequence is MF7 protein (148 aa).

The polypeptide is MF7 protein (Myxoma virus (strain Lausanne) (MYXV)).